Reading from the N-terminus, the 360-residue chain is Glycerol-1-phosphate dehydrogenase [NAD(P)+] (360 aa).

NAD(+) contacts are provided by residues 108 to 112 and 130 to 133; these read GRVID and TAAS. Residue aspartate 135 participates in substrate binding. NAD(+) is bound at residue serine 139. Substrate is bound at residue aspartate 182. Aspartate 182 and histidine 262 together coordinate Zn(2+). A substrate-binding site is contributed by histidine 266. Histidine 278 lines the Zn(2+) pocket.

It belongs to the glycerol-1-phosphate dehydrogenase family. It depends on Zn(2+) as a cofactor.

Its subcellular location is the cytoplasm. The catalysed reaction is sn-glycerol 1-phosphate + NAD(+) = dihydroxyacetone phosphate + NADH + H(+). The enzyme catalyses sn-glycerol 1-phosphate + NADP(+) = dihydroxyacetone phosphate + NADPH + H(+). The protein operates within membrane lipid metabolism; glycerophospholipid metabolism. Functionally, catalyzes the NAD(P)H-dependent reduction of dihydroxyacetonephosphate (DHAP or glycerone phosphate) to glycerol 1-phosphate (G1P). The G1P thus generated is used as the glycerophosphate backbone of phospholipids in the cellular membranes of Archaea. In Methanocorpusculum labreanum (strain ATCC 43576 / DSM 4855 / Z), this protein is Glycerol-1-phosphate dehydrogenase [NAD(P)+].